The chain runs to 890 residues: Phosphotransferase RcsD (890 aa).

Residues 1–21 (MRQKETTATTRFSLLPGSITR) lie on the Cytoplasmic side of the membrane. Residues 22–42 (FFLLLIIVLLVTMGVMVQSAV) form a helical membrane-spanning segment. Residues 43-308 (NAWLKDKSYQ…GTLLLDTLQN (266 aa)) lie on the Periplasmic side of the membrane. A helical membrane pass occupies residues 309 to 329 (ILLPLLLNIGLLALALFGYTT). Topologically, residues 330–890 (FRHFSSRSTE…DIDSYVKSLL (561 aa)) are cytoplasmic. Positions 468-678 (NIGDALKEPA…RYSVHIKMLA (211 aa)) are histidine-like kinase. Residues 803 to 890 (AQLHASGYYA…DIDSYVKSLL (88 aa)) enclose the HPt domain. Residue H842 is modified to Phosphohistidine.

The protein belongs to the RcsD family. In terms of assembly, interacts with RcsC and RcsB. Has a higher affinity for RcsB than for RcsC. Post-translationally, phosphorylated by RcsC.

It localises to the cell inner membrane. Functionally, component of the Rcs signaling system, which controls transcription of numerous genes. RcsD is a phosphotransfer intermediate between the sensor kinase RcsC and the response regulator RcsB. It acquires a phosphoryl group from RcsC and transfers it to RcsB. The system controls expression of genes involved in colanic acid capsule synthesis, biofilm formation and cell division. The sequence is that of Phosphotransferase RcsD from Escherichia coli (strain K12).